Consider the following 200-residue polypeptide: NADH-quinone oxidoreductase subunit I 1 (200 aa).

2 4Fe-4S ferredoxin-type domains span residues 52-82 and 98-127; these read LNRH…VEGA and RVYQ…MTNE. Residues Cys62, Cys65, Cys68, Cys72, Cys107, Cys110, Cys113, and Cys117 each contribute to the [4Fe-4S] cluster site. The interval 181–200 is disordered; it reads TERQVAVSKGEKPQDEGVEA. Basic and acidic residues predominate over residues 189 to 200; that stretch reads KGEKPQDEGVEA.

It belongs to the complex I 23 kDa subunit family. As to quaternary structure, NDH-1 is composed of 14 different subunits. Subunits NuoA, H, J, K, L, M, N constitute the membrane sector of the complex. [4Fe-4S] cluster serves as cofactor.

It localises to the cell membrane. It catalyses the reaction a quinone + NADH + 5 H(+)(in) = a quinol + NAD(+) + 4 H(+)(out). NDH-1 shuttles electrons from NADH, via FMN and iron-sulfur (Fe-S) centers, to quinones in the respiratory chain. The immediate electron acceptor for the enzyme in this species is believed to be ubiquinone. Couples the redox reaction to proton translocation (for every two electrons transferred, four hydrogen ions are translocated across the cytoplasmic membrane), and thus conserves the redox energy in a proton gradient. This chain is NADH-quinone oxidoreductase subunit I 1, found in Streptomyces avermitilis (strain ATCC 31267 / DSM 46492 / JCM 5070 / NBRC 14893 / NCIMB 12804 / NRRL 8165 / MA-4680).